Reading from the N-terminus, the 160-residue chain is Cyclic pyranopterin monophosphate synthase (160 aa).

Substrate contacts are provided by residues 77 to 79 and 114 to 115; these read LCH and ME. The active site involves Asp-129.

It belongs to the MoaC family. In terms of assembly, homohexamer; trimer of dimers.

It catalyses the reaction (8S)-3',8-cyclo-7,8-dihydroguanosine 5'-triphosphate = cyclic pyranopterin phosphate + diphosphate. The protein operates within cofactor biosynthesis; molybdopterin biosynthesis. Catalyzes the conversion of (8S)-3',8-cyclo-7,8-dihydroguanosine 5'-triphosphate to cyclic pyranopterin monophosphate (cPMP). The protein is Cyclic pyranopterin monophosphate synthase of Alcanivorax borkumensis (strain ATCC 700651 / DSM 11573 / NCIMB 13689 / SK2).